A 943-amino-acid chain; its full sequence is Leucine--tRNA ligase (943 aa).

Residues 40–51 (PYPSGAGLHVGH) carry the 'HIGH' region motif. Residues 717–721 (KMSKS) carry the 'KMSKS' region motif. Position 720 (lysine 720) interacts with ATP.

It belongs to the class-I aminoacyl-tRNA synthetase family.

Its subcellular location is the cytoplasm. The catalysed reaction is tRNA(Leu) + L-leucine + ATP = L-leucyl-tRNA(Leu) + AMP + diphosphate. The polypeptide is Leucine--tRNA ligase (Bacteroides fragilis (strain YCH46)).